The following is a 434-amino-acid chain: Glutamyl-tRNA reductase (434 aa).

Substrate contacts are provided by residues 49-52 (TCNR), Ser-109, 114-116 (EPQ), and Gln-120. The active-site Nucleophile is Cys-50. An NADP(+)-binding site is contributed by 189–194 (GAGEMC).

This sequence belongs to the glutamyl-tRNA reductase family. In terms of assembly, homodimer.

The catalysed reaction is (S)-4-amino-5-oxopentanoate + tRNA(Glu) + NADP(+) = L-glutamyl-tRNA(Glu) + NADPH + H(+). It functions in the pathway porphyrin-containing compound metabolism; protoporphyrin-IX biosynthesis; 5-aminolevulinate from L-glutamyl-tRNA(Glu): step 1/2. In terms of biological role, catalyzes the NADPH-dependent reduction of glutamyl-tRNA(Glu) to glutamate 1-semialdehyde (GSA). This chain is Glutamyl-tRNA reductase, found in Citrifermentans bemidjiense (strain ATCC BAA-1014 / DSM 16622 / JCM 12645 / Bem) (Geobacter bemidjiensis).